A 289-amino-acid polypeptide reads, in one-letter code: Fumagillin beta-trans-bergamotene synthase af520 (289 aa).

6 helical membrane-spanning segments follow: residues 35-55 (AVAL…GFLW), 95-115 (TLLY…TNTI), 142-162 (LIGA…FDGG), 165-185 (LHGL…TTGH), 222-242 (AWTI…LAYV), and 262-282 (YVSY…PIFP).

The protein belongs to the paxB family.

It localises to the membrane. The catalysed reaction is (2E,6E)-farnesyl diphosphate = (+)-exo-beta-bergamotene + diphosphate. It functions in the pathway secondary metabolite biosynthesis; terpenoid biosynthesis. Its function is as follows. Beta-trans-bergamotene synthase; part of the gene cluster that mediates the biosynthesis of fumagillin, a meroterpenoid that has numerous biological activities including irreversible inhibition of human type 2 methionine aminopeptidase (METAP2). Within the pathway, the membrane-bound fumagillin beta-trans-bergamotene synthase af520 converts farnesyl pyrophosphate (FPP) to beta-trans-bergamotene. The pathway begins with the conversion of FPP to beta-trans-bergamotene by af520. The multifunctional cytochrome P450 monooxygenase af510 then converts beta-trans-bergamotene into 5-keto-demethoxyfumagillol via several oxydation steps. 5-keto-demethoxyfumagillol is then subjected to successive C-6 hydroxylation and O-methylation by the dioxygenase af480 and O-methyltransferase af390-400, respectively, to yield 5-keto-fumagillol, which is then stereoselectively reduced by the keto-reductase af490 to 5R-hydroxy-seco-sesquiterpene. The next step is the polyketide transferase af380-catalyzed transfer of a dodecapentaenoyl group synthesized by the polyketide synthase af370 onto 5R-hydroxy-seco-sesquiterpene which leads to the production of prefumagillin. Finally, oxidative cleavage by the monooxygenase af470 converts prefumagillin to fumagillin. The sequence is that of Fumagillin beta-trans-bergamotene synthase af520 from Aspergillus fumigatus (strain ATCC MYA-4609 / CBS 101355 / FGSC A1100 / Af293) (Neosartorya fumigata).